The primary structure comprises 451 residues: Probable glycine dehydrogenase (decarboxylating) subunit 1 (451 aa).

This sequence belongs to the GcvP family. N-terminal subunit subfamily. In terms of assembly, the glycine cleavage system is composed of four proteins: P, T, L and H. In this organism, the P 'protein' is a heterodimer of two subunits.

The enzyme catalyses N(6)-[(R)-lipoyl]-L-lysyl-[glycine-cleavage complex H protein] + glycine + H(+) = N(6)-[(R)-S(8)-aminomethyldihydrolipoyl]-L-lysyl-[glycine-cleavage complex H protein] + CO2. Its function is as follows. The glycine cleavage system catalyzes the degradation of glycine. The P protein binds the alpha-amino group of glycine through its pyridoxal phosphate cofactor; CO(2) is released and the remaining methylamine moiety is then transferred to the lipoamide cofactor of the H protein. This Thermococcus kodakarensis (strain ATCC BAA-918 / JCM 12380 / KOD1) (Pyrococcus kodakaraensis (strain KOD1)) protein is Probable glycine dehydrogenase (decarboxylating) subunit 1.